A 334-amino-acid chain; its full sequence is Nucleoid-associated protein ESA_01050 (334 aa).

It belongs to the YejK family.

Its subcellular location is the cytoplasm. It is found in the nucleoid. In Cronobacter sakazakii (strain ATCC BAA-894) (Enterobacter sakazakii), this protein is Nucleoid-associated protein ESA_01050.